The primary structure comprises 359 residues: NADH-quinone oxidoreductase subunit H (359 aa).

8 consecutive transmembrane segments (helical) span residues 16-36 (IWPA…AVLA), 94-114 (GLFI…WAVI), 128-148 (GLLF…IAGW), 167-187 (VSYE…SGSL), 205-225 (GLTF…VYFI), 261-281 (FFLA…LLFL), 296-316 (IPGW…FLWV), and 331-351 (LGWK…GAWM).

The protein belongs to the complex I subunit 1 family. NDH-1 is composed of 14 different subunits. Subunits NuoA, H, J, K, L, M, N constitute the membrane sector of the complex.

It is found in the cell inner membrane. The enzyme catalyses a quinone + NADH + 5 H(+)(in) = a quinol + NAD(+) + 4 H(+)(out). In terms of biological role, NDH-1 shuttles electrons from NADH, via FMN and iron-sulfur (Fe-S) centers, to quinones in the respiratory chain. The immediate electron acceptor for the enzyme in this species is believed to be ubiquinone. Couples the redox reaction to proton translocation (for every two electrons transferred, four hydrogen ions are translocated across the cytoplasmic membrane), and thus conserves the redox energy in a proton gradient. This subunit may bind ubiquinone. This is NADH-quinone oxidoreductase subunit H from Polaromonas naphthalenivorans (strain CJ2).